Consider the following 149-residue polypeptide: UPF0102 protein Bpro_0391 (149 aa).

Residues 1–30 (MWFSRKQVVKPPPDGSRAQPGQVTTKSRGD) form a disordered region.

It belongs to the UPF0102 family.

This Polaromonas sp. (strain JS666 / ATCC BAA-500) protein is UPF0102 protein Bpro_0391.